A 251-amino-acid polypeptide reads, in one-letter code: Triosephosphate isomerase, glycosomal (251 aa).

Substrate contacts are provided by Asn-12 and Lys-14. The active-site Electrophile is His-96. Glu-168 serves as the catalytic Proton acceptor.

It belongs to the triosephosphate isomerase family. As to quaternary structure, homodimer.

It is found in the glycosome. The catalysed reaction is D-glyceraldehyde 3-phosphate = dihydroxyacetone phosphate. It functions in the pathway carbohydrate biosynthesis; gluconeogenesis. It participates in carbohydrate degradation; glycolysis; D-glyceraldehyde 3-phosphate from glycerone phosphate: step 1/1. The protein is Triosephosphate isomerase, glycosomal of Trypanosoma cruzi.